Here is a 406-residue protein sequence, read N- to C-terminus: LIM/homeobox protein Lhx2 (406 aa).

LIM zinc-binding domains follow at residues Cys53–Asp105 and Cys115–His168. Positions Asp250 to Arg270 are disordered. The segment at residues Thr266–Leu325 is a DNA-binding region (homeobox). The short motif at Lys307–Arg323 is the Nuclear localization signal element. Over residues Gln328–Ala356 the composition is skewed to polar residues. Disordered stretches follow at residues Gln328–Thr374 and Gly387–Phe406. Low complexity predominate over residues Ser357 to Thr374. The span at Ser396 to Phe406 shows a compositional bias: polar residues.

As to quaternary structure, interacts (via LIM domains) with CITED2. Interacts with POU4F2.

The protein resides in the nucleus. Acts as a transcriptional activator. Stimulates the promoter of the alpha-glycoprotein gene. Transcriptional regulatory protein involved in the control of cell differentiation in developing lymphoid and neural cell types. In Homo sapiens (Human), this protein is LIM/homeobox protein Lhx2 (LHX2).